A 508-amino-acid chain; its full sequence is Histidine ammonia-lyase (508 aa).

A cross-link (5-imidazolinone (Ala-Gly)) is located at residues 145–147; sequence ASG. Position 146 is a 2,3-didehydroalanine (Ser) (Ser-146).

Belongs to the PAL/histidase family. In terms of processing, contains an active site 4-methylidene-imidazol-5-one (MIO), which is formed autocatalytically by cyclization and dehydration of residues Ala-Ser-Gly.

The protein resides in the cytoplasm. It catalyses the reaction L-histidine = trans-urocanate + NH4(+). It participates in amino-acid degradation; L-histidine degradation into L-glutamate; N-formimidoyl-L-glutamate from L-histidine: step 1/3. The sequence is that of Histidine ammonia-lyase from Myxococcus xanthus (strain DK1622).